The primary structure comprises 227 residues: Uracil-DNA glycosylase (227 aa).

Asp-64 (proton acceptor) is an active-site residue.

It belongs to the uracil-DNA glycosylase (UDG) superfamily. UNG family.

The protein resides in the cytoplasm. It catalyses the reaction Hydrolyzes single-stranded DNA or mismatched double-stranded DNA and polynucleotides, releasing free uracil.. Its function is as follows. Excises uracil residues from the DNA which can arise as a result of misincorporation of dUMP residues by DNA polymerase or due to deamination of cytosine. This Alkaliphilus metalliredigens (strain QYMF) protein is Uracil-DNA glycosylase.